A 138-amino-acid polypeptide reads, in one-letter code: Large ribosomal subunit protein bL17 (138 aa).

The protein belongs to the bacterial ribosomal protein bL17 family. As to quaternary structure, part of the 50S ribosomal subunit. Contacts protein L32.

The protein is Large ribosomal subunit protein bL17 of Nitrobacter hamburgensis (strain DSM 10229 / NCIMB 13809 / X14).